The primary structure comprises 254 residues: 14-3-3-like protein RA215 (254 aa).

Belongs to the 14-3-3 family.

This Solanum tuberosum (Potato) protein is 14-3-3-like protein RA215.